Consider the following 257-residue polypeptide: Acetylglutamate kinase (257 aa).

Substrate is bound by residues 41–42, Arg-63, and Asn-156; that span reads GG.

This sequence belongs to the acetylglutamate kinase family. ArgB subfamily.

The protein localises to the cytoplasm. It catalyses the reaction N-acetyl-L-glutamate + ATP = N-acetyl-L-glutamyl 5-phosphate + ADP. It functions in the pathway amino-acid biosynthesis; L-arginine biosynthesis; N(2)-acetyl-L-ornithine from L-glutamate: step 2/4. Catalyzes the ATP-dependent phosphorylation of N-acetyl-L-glutamate. The polypeptide is Acetylglutamate kinase (Geobacillus sp. (strain WCH70)).